We begin with the raw amino-acid sequence, 474 residues long: Type I restriction enzyme EcoBI specificity subunit (474 aa).

The protein belongs to the type-I restriction system S methylase family. As to quaternary structure, the type I restriction/modification system is composed of three polypeptides R, M and S. The restriction enzyme has stoichiometry R(2)M(2)S(1) while the methyltransferase is M(2)S(1).

Functionally, the specificity (S) subunit of a type I restriction enzyme; this subunit dictates DNA sequence specificity. The M and S subunits together form a methyltransferase (MTase) that methylates A-3 on the top strand and A-4 on the bottom strand of the sequence 5'-TGAN(8)TGCT-3'. In the presence of the R subunit the complex can also act as an endonuclease, binding to the same target sequence but cutting the DNA some distance from this site. Whether the DNA is cut or modified depends on the methylation state of the target sequence. When the target site is unmodified, the DNA is cut. When the target site is hemimethylated, the complex acts as a maintenance MTase modifying the DNA so that both strands become methylated. After locating a non-methylated recognition site, the enzyme complex serves as a molecular motor that translocates DNA in an ATP-dependent manner until a collision occurs that triggers cleavage. This chain is Type I restriction enzyme EcoBI specificity subunit, found in Escherichia coli.